The primary structure comprises 267 residues: Acyl-[acyl-carrier-protein]--UDP-N-acetylglucosamine O-acyltransferase (267 aa).

This sequence belongs to the transferase hexapeptide repeat family. LpxA subfamily. In terms of assembly, homotrimer.

The protein localises to the cytoplasm. The enzyme catalyses a (3R)-hydroxyacyl-[ACP] + UDP-N-acetyl-alpha-D-glucosamine = a UDP-3-O-[(3R)-3-hydroxyacyl]-N-acetyl-alpha-D-glucosamine + holo-[ACP]. It functions in the pathway glycolipid biosynthesis; lipid IV(A) biosynthesis; lipid IV(A) from (3R)-3-hydroxytetradecanoyl-[acyl-carrier-protein] and UDP-N-acetyl-alpha-D-glucosamine: step 1/6. Functionally, involved in the biosynthesis of lipid A, a phosphorylated glycolipid that anchors the lipopolysaccharide to the outer membrane of the cell. The protein is Acyl-[acyl-carrier-protein]--UDP-N-acetylglucosamine O-acyltransferase of Proteus mirabilis (strain HI4320).